A 241-amino-acid polypeptide reads, in one-letter code: Tryptophan synthase alpha chain (241 aa).

Active-site proton acceptor residues include Glu31 and Asp42.

This sequence belongs to the TrpA family. In terms of assembly, tetramer of two alpha and two beta chains.

The catalysed reaction is (1S,2R)-1-C-(indol-3-yl)glycerol 3-phosphate + L-serine = D-glyceraldehyde 3-phosphate + L-tryptophan + H2O. It functions in the pathway amino-acid biosynthesis; L-tryptophan biosynthesis; L-tryptophan from chorismate: step 5/5. Its function is as follows. The alpha subunit is responsible for the aldol cleavage of indoleglycerol phosphate to indole and glyceraldehyde 3-phosphate. The protein is Tryptophan synthase alpha chain of Staphylococcus saprophyticus subsp. saprophyticus (strain ATCC 15305 / DSM 20229 / NCIMB 8711 / NCTC 7292 / S-41).